The sequence spans 302 residues: 4-hydroxy-tetrahydrodipicolinate synthase (302 aa).

Threonine 55 is a pyruvate binding site. The active-site Proton donor/acceptor is the tyrosine 144. Lysine 172 (schiff-base intermediate with substrate) is an active-site residue. Residue valine 214 coordinates pyruvate.

It belongs to the DapA family. As to quaternary structure, homotetramer; dimer of dimers.

The protein localises to the cytoplasm. It catalyses the reaction L-aspartate 4-semialdehyde + pyruvate = (2S,4S)-4-hydroxy-2,3,4,5-tetrahydrodipicolinate + H2O + H(+). It functions in the pathway amino-acid biosynthesis; L-lysine biosynthesis via DAP pathway; (S)-tetrahydrodipicolinate from L-aspartate: step 3/4. Catalyzes the condensation of (S)-aspartate-beta-semialdehyde [(S)-ASA] and pyruvate to 4-hydroxy-tetrahydrodipicolinate (HTPA). The sequence is that of 4-hydroxy-tetrahydrodipicolinate synthase from Prochlorococcus marinus (strain MIT 9211).